We begin with the raw amino-acid sequence, 214 residues long: Probable nicotinate-nucleotide adenylyltransferase (214 aa).

This sequence belongs to the NadD family.

The enzyme catalyses nicotinate beta-D-ribonucleotide + ATP + H(+) = deamido-NAD(+) + diphosphate. It participates in cofactor biosynthesis; NAD(+) biosynthesis; deamido-NAD(+) from nicotinate D-ribonucleotide: step 1/1. Functionally, catalyzes the reversible adenylation of nicotinate mononucleotide (NaMN) to nicotinic acid adenine dinucleotide (NaAD). The protein is Probable nicotinate-nucleotide adenylyltransferase of Buchnera aphidicola subsp. Acyrthosiphon pisum (strain 5A).